Here is a 248-residue protein sequence, read N- to C-terminus: 1-(5-phosphoribosyl)-5-[(5-phosphoribosylamino)methylideneamino] imidazole-4-carboxamide isomerase (248 aa).

The Proton acceptor role is filled by D8. The Proton donor role is filled by D129.

Belongs to the HisA/HisF family.

It is found in the cytoplasm. The catalysed reaction is 1-(5-phospho-beta-D-ribosyl)-5-[(5-phospho-beta-D-ribosylamino)methylideneamino]imidazole-4-carboxamide = 5-[(5-phospho-1-deoxy-D-ribulos-1-ylimino)methylamino]-1-(5-phospho-beta-D-ribosyl)imidazole-4-carboxamide. It participates in amino-acid biosynthesis; L-histidine biosynthesis; L-histidine from 5-phospho-alpha-D-ribose 1-diphosphate: step 4/9. In Rhizobium johnstonii (strain DSM 114642 / LMG 32736 / 3841) (Rhizobium leguminosarum bv. viciae), this protein is 1-(5-phosphoribosyl)-5-[(5-phosphoribosylamino)methylideneamino] imidazole-4-carboxamide isomerase.